Consider the following 108-residue polypeptide: Heme oxygenase (staphylobilin-producing) 2 (108 aa).

The ABM domain maps to Phe2 to Leu93. A Fe cation-binding site is contributed by Asn6. Heme contacts are provided by residues Arg21–Ile28 and His76.

The protein belongs to the antibiotic biosynthesis monooxygenase family. Heme-degrading monooxygenase IsdG subfamily. As to quaternary structure, homodimer.

It is found in the cytoplasm. It catalyses the reaction heme b + 5 AH2 + 4 O2 + 2 H(+) = delta-staphylobilin + Fe(2+) + formaldehyde + 5 A + 4 H2O. It carries out the reaction heme b + 5 AH2 + 4 O2 + 2 H(+) = beta-staphylobilin + Fe(2+) + formaldehyde + 5 A + 4 H2O. Functionally, allows bacterial pathogens to use the host heme as an iron source. Catalyzes the oxidative degradation of the heme macrocyclic porphyrin ring to the oxo-bilirubin chromophore staphylobilin (a mixture of the linear tetrapyrroles 5-oxo-delta-bilirubin and 15-oxo-beta-bilirubin) in the presence of a suitable electron donor such as ascorbate or NADPH--cytochrome P450 reductase, with subsequent release of free iron. This Staphylococcus aureus (strain MRSA252) protein is Heme oxygenase (staphylobilin-producing) 2 (isdI).